The primary structure comprises 189 residues: Parkinson disease protein 7 homolog (189 aa).

At Ala-2 the chain carries N-acetylalanine. 2 S-palmitoyl cysteine lipidation sites follow: Cys-46 and Cys-53. At Tyr-67 the chain carries Phosphotyrosine. Cys-106 acts as the Nucleophile in catalysis. The residue at position 106 (Cys-106) is a Cysteine sulfinic acid (-SO2H); alternate. A lipid anchor (S-palmitoyl cysteine; alternate) is attached at Cys-106. His-126 is a catalytic residue. Lys-130 participates in a covalent cross-link: Glycyl lysine isopeptide (Lys-Gly) (interchain with G-Cter in SUMO). Lys-148 is modified (N6-acetyllysine). An N6-succinyllysine modification is found at Lys-182.

Belongs to the peptidase C56 family. Homodimer. Binds EFCAB6/DJBP and PIAS2. Part of a ternary complex containing PARK7, EFCAB6/DJBP and AR. Binds to HIPK1. Interacts (via N-terminus) with OTUD7B. Interacts with BBS1, CLCF1 and MTERF. Interacts (via C-terminus) with NCF1; the interaction is enhanced by LPS and modulates NCF1 phosphorylation and membrane translocation. Interacts with NENF. Requires Deglycase activity does not require glutathione as a cofactor, however, glycated glutathione constitutes a PARK7 substrate. as cofactor. Sumoylated on Lys-130 by PIAS2 or PIAS4; which is essential for cell-growth promoting activity and transforming activity. Post-translationally, undergoes cleavage of a C-terminal peptide and subsequent activation of protease activity in response to oxidative stress. As to expression, expressed in erythroblasts and in mature red blood cells from peripheral blood (at protein level). In pancreas, expression is higher in islets than surrounding exocrine tissues.

It localises to the cell membrane. The protein resides in the cytoplasm. It is found in the membrane raft. Its subcellular location is the nucleus. The protein localises to the mitochondrion. It localises to the endoplasmic reticulum. The enzyme catalyses N(omega)-(1-hydroxy-2-oxopropyl)-L-arginyl-[protein] + H2O = lactate + L-arginyl-[protein] + H(+). It catalyses the reaction N(6)-(1-hydroxy-2-oxopropyl)-L-lysyl-[protein] + H2O = lactate + L-lysyl-[protein] + H(+). The catalysed reaction is S-(1-hydroxy-2-oxopropyl)-L-cysteinyl-[protein] + H2O = lactate + L-cysteinyl-[protein] + H(+). It carries out the reaction N(omega)-(1-hydroxy-2-oxoethyl)-L-arginyl-[protein] + H2O = L-arginyl-[protein] + glycolate + H(+). The enzyme catalyses N(6)-(1-hydroxy-2-oxoethyl)-L-lysyl-[protein] + H2O = glycolate + L-lysyl-[protein] + H(+). It catalyses the reaction S-(1-hydroxy-2-oxoethyl)-L-cysteinyl-[protein] + H2O = glycolate + L-cysteinyl-[protein] + H(+). The catalysed reaction is N(2)-(1-hydroxy-2-oxopropyl)-dGTP + H2O = lactate + dGTP + H(+). It carries out the reaction N(2)-(1-hydroxy-2-oxopropyl)-GTP + H2O = lactate + GTP + H(+). The enzyme catalyses N(2)-(1-hydroxy-2-oxopropyl)-GDP + H2O = lactate + GDP + H(+). It catalyses the reaction N(2)-(1-hydroxy-2-oxopropyl)-GMP + H2O = lactate + GMP + H(+). The catalysed reaction is N(2)-(1-hydroxy-2-oxoethyl)-dGTP + H2O = dGTP + glycolate + H(+). It carries out the reaction N(2)-(1-hydroxy-2-oxoethyl)-GTP + H2O = glycolate + GTP + H(+). The enzyme catalyses N(2)-(1-hydroxy-2-oxoethyl)-GDP + H2O = glycolate + GDP + H(+). It catalyses the reaction N(2)-(1-hydroxy-2-oxoethyl)-GMP + H2O = glycolate + GMP + H(+). The catalysed reaction is an N(2)-(1-hydroxy-2-oxopropyl)-guanosine in RNA + H2O = a guanosine in RNA + lactate + H(+). It carries out the reaction an N(2)-(1-hydroxy-2-oxopropyl)-2'-deoxyguanosine in DNA + H2O = a 2'-deoxyguanosine in DNA + lactate + H(+). The enzyme catalyses an N(2)-(1-hydroxy-2-oxoethyl)-guanosine in RNA + H2O = a guanosine in RNA + glycolate + H(+). It catalyses the reaction an N(2)-(1-hydroxy-2-oxoethyl)-2'-deoxyguanosine in DNA + H2O = a 2'-deoxyguanosine in DNA + glycolate + H(+). Multifunctional protein with controversial molecular function which plays an important role in cell protection against oxidative stress and cell death acting as oxidative stress sensor and redox-sensitive chaperone and protease. It is involved in neuroprotective mechanisms like the stabilization of NFE2L2 and PINK1 proteins, male fertility as a positive regulator of androgen signaling pathway as well as cell growth and transformation through, for instance, the modulation of NF-kappa-B signaling pathway. Has been described as a protein and nucleotide deglycase that catalyzes the deglycation of the Maillard adducts formed between amino groups of proteins or nucleotides and reactive carbonyl groups of glyoxals. But this function is rebuted by other works. As a protein deglycase, repairs methylglyoxal- and glyoxal-glycated proteins, and releases repaired proteins and lactate or glycolate, respectively. Deglycates cysteine, arginine and lysine residues in proteins, and thus reactivates these proteins by reversing glycation by glyoxals. Acts on early glycation intermediates (hemithioacetals and aminocarbinols), preventing the formation of advanced glycation endproducts (AGE) that cause irreversible damage. Also functions as a nucleotide deglycase able to repair glycated guanine in the free nucleotide pool (GTP, GDP, GMP, dGTP) and in DNA and RNA. Is thus involved in a major nucleotide repair system named guanine glycation repair (GG repair), dedicated to reversing methylglyoxal and glyoxal damage via nucleotide sanitization and direct nucleic acid repair. Protects histones from adduction by methylglyoxal, controls the levels of methylglyoxal-derived argininine modifications on chromatin. Able to remove the glycations and restore histone 3, histone glycation disrupts both local and global chromatin architecture by altering histone-DNA interactions as well as histone acetylation and ubiquitination levels. Displays a very low glyoxalase activity that may reflect its deglycase activity. Eliminates hydrogen peroxide and protects cells against hydrogen peroxide-induced cell death. Required for correct mitochondrial morphology and function as well as for autophagy of dysfunctional mitochondria. Plays a role in regulating expression or stability of the mitochondrial uncoupling proteins SLC25A14 and SLC25A27 in dopaminergic neurons of the substantia nigra pars compacta and attenuates the oxidative stress induced by calcium entry into the neurons via L-type channels during pacemaking. Regulates astrocyte inflammatory responses, may modulate lipid rafts-dependent endocytosis in astrocytes and neuronal cells. In pancreatic islets, involved in the maintenance of mitochondrial reactive oxygen species (ROS) levels and glucose homeostasis in an age- and diet dependent manner. Protects pancreatic beta cells from cell death induced by inflammatory and cytotoxic setting. Binds to a number of mRNAs containing multiple copies of GG or CC motifs and partially inhibits their translation but dissociates following oxidative stress. Metal-binding protein able to bind copper as well as toxic mercury ions, enhances the cell protection mechanism against induced metal toxicity. In macrophages, interacts with the NADPH oxidase subunit NCF1 to direct NADPH oxidase-dependent ROS production, and protects against sepsis. The sequence is that of Parkinson disease protein 7 homolog from Mus musculus (Mouse).